A 944-amino-acid polypeptide reads, in one-letter code: Putative alpha,alpha-trehalose-phosphate synthase [UDP-forming] 106 kDa subunit (944 aa).

Residues 73 to 84 (TNAQSNIATPSP) show a composition bias toward polar residues. 2 disordered regions span residues 73-113 (TNAQ…NSLS) and 129-166 (SKND…SELE). The segment covering 101-113 (PSSDSPSLENSLS) has biased composition (low complexity). 6 positions are modified to phosphoserine: Ser141, Ser145, Ser149, Ser150, Ser163, and Ser177. Positions 173–652 (SRSLSFSMNG…AVTFQSLIKE (480 aa)) are glycosyltransferase. At Thr189 the chain carries Phosphothreonine.

The protein in the N-terminal section; belongs to the glycosyltransferase 20 family.

It catalyses the reaction D-glucose 6-phosphate + UDP-alpha-D-glucose = alpha,alpha-trehalose 6-phosphate + UDP + H(+). The polypeptide is Putative alpha,alpha-trehalose-phosphate synthase [UDP-forming] 106 kDa subunit (Schizosaccharomyces pombe (strain 972 / ATCC 24843) (Fission yeast)).